The sequence spans 388 residues: Flap endonuclease 1 (388 aa).

The segment at Met1 to Arg104 is N-domain. Asp34 is a binding site for Mg(2+). 2 residues coordinate DNA: Arg47 and Arg70. Mg(2+)-binding residues include Asp86, Glu158, Glu160, Asp179, and Asp181. Residues Glu122–Tyr253 are I-domain. A DNA-binding site is contributed by Glu158. 2 residues coordinate DNA: Gly231 and Asp233. Mg(2+) is bound at residue Asp233. Residues Thr336–Phe344 are interaction with PCNA. The segment at Phe343–Lys388 is disordered.

It belongs to the XPG/RAD2 endonuclease family. FEN1 subfamily. As to quaternary structure, interacts with PCNA. Three molecules of FEN1 bind to one PCNA trimer with each molecule binding to one PCNA monomer. PCNA stimulates the nuclease activity without altering cleavage specificity. Mg(2+) serves as cofactor. Post-translationally, phosphorylated. Phosphorylation upon DNA damage induces relocalization to the nuclear plasma.

It localises to the nucleus. Its subcellular location is the nucleolus. The protein resides in the nucleoplasm. It is found in the mitochondrion. Structure-specific nuclease with 5'-flap endonuclease and 5'-3' exonuclease activities involved in DNA replication and repair. During DNA replication, cleaves the 5'-overhanging flap structure that is generated by displacement synthesis when DNA polymerase encounters the 5'-end of a downstream Okazaki fragment. It enters the flap from the 5'-end and then tracks to cleave the flap base, leaving a nick for ligation. Also involved in the long patch base excision repair (LP-BER) pathway, by cleaving within the apurinic/apyrimidinic (AP) site-terminated flap. Acts as a genome stabilization factor that prevents flaps from equilibrating into structures that lead to duplications and deletions. Also possesses 5'-3' exonuclease activity on nicked or gapped double-stranded DNA, and exhibits RNase H activity. Also involved in replication and repair of rDNA and in repairing mitochondrial DNA. The chain is Flap endonuclease 1 from Drosophila ananassae (Fruit fly).